The sequence spans 401 residues: Phosphoglycerate kinase (401 aa).

Substrate is bound by residues aspartate 24–asparagine 26, arginine 40, histidine 63–arginine 66, arginine 122, and arginine 155. Residues lysine 206, glycine 297, glutamate 328, and glycine 357 to serine 360 contribute to the ATP site.

This sequence belongs to the phosphoglycerate kinase family. In terms of assembly, monomer.

It localises to the cytoplasm. It carries out the reaction (2R)-3-phosphoglycerate + ATP = (2R)-3-phospho-glyceroyl phosphate + ADP. The protein operates within carbohydrate degradation; glycolysis; pyruvate from D-glyceraldehyde 3-phosphate: step 2/5. This is Phosphoglycerate kinase from Gloeothece citriformis (strain PCC 7424) (Cyanothece sp. (strain PCC 7424)).